Reading from the N-terminus, the 780-residue chain is Protein phosphatase 1 regulatory subunit 21 (780 aa).

Coiled coils occupy residues Met1 to Glu209 and Glu556 to Arg605. The disordered stretch occupies residues Glu84 to Gln104. The segment covering Glu95–Gln104 has biased composition (low complexity). Thr652 carries the post-translational modification Phosphothreonine. A coiled-coil region spans residues Ala694–Leu742.

As to quaternary structure, component of the FERRY complex, composed of five subunits: TBCK, PPP1R21, FERRY3, CRYZL1 and GATAD1, with a ratio of 1:2:1:2:4 respectively. PPP1R21 serves as a binding hub connecting all five complex subunits to mediate the binding to specific mitochondrial mRNAs. Interacts with the GTP-bound form of RAB5A (via its C-terminal region); linking the mRNP complex onto trafficking endosomes for active mRNA transport. Interacts with PPP1CA. Expressed at 16 dpc in the cortex (at protein level).

It localises to the early endosome. Its function is as follows. Component of the FERRY complex (Five-subunit Endosomal Rab5 and RNA/ribosome intermediary). The FERRY complex directly interacts with mRNAs and RAB5A, and functions as a RAB5A effector involved in the localization and the distribution of specific mRNAs most likely by mediating their endosomal transport. The complex recruits mRNAs and ribosomes to early endosomes through direct mRNA-interaction. In the complex, PPP1R21 serves as a binding hub connecting all five complex subunits and mediating the binding to mRNA and early endosomes via RAB5A. Putative regulator of protein phosphatase 1 (PP1) activity. May play a role in the endosomal sorting process or in endosome maturation pathway. This chain is Protein phosphatase 1 regulatory subunit 21 (Ppp1r21), found in Mus musculus (Mouse).